We begin with the raw amino-acid sequence, 29 residues long: Cytochrome b6-f complex subunit 8 (29 aa).

Residues 3 to 23 (MVSLAWAALMVVFTFSLSLVV) traverse the membrane as a helical segment.

It belongs to the PetN family. The 4 large subunits of the cytochrome b6-f complex are cytochrome b6, subunit IV (17 kDa polypeptide, PetD), cytochrome f and the Rieske protein, while the 4 small subunits are PetG, PetL, PetM and PetN. The complex functions as a dimer.

The protein resides in the plastid. It localises to the chloroplast thylakoid membrane. In terms of biological role, component of the cytochrome b6-f complex, which mediates electron transfer between photosystem II (PSII) and photosystem I (PSI), cyclic electron flow around PSI, and state transitions. This is Cytochrome b6-f complex subunit 8 from Cucumis sativus (Cucumber).